The following is a 146-amino-acid chain: Large ribosomal subunit protein uL15 (146 aa).

The segment covering 1 to 18 (MKLHELKPAEGSRKERNR) has biased composition (basic and acidic residues). The segment at 1 to 54 (MKLHELKPAEGSRKERNRVGRGVATGNGKTSGRGHKGQKARSGGGVRPGFEGGQ) is disordered. Residues 42–52 (SGGGVRPGFEG) show a composition bias toward gly residues.

Belongs to the universal ribosomal protein uL15 family. Part of the 50S ribosomal subunit.

Binds to the 23S rRNA. The polypeptide is Large ribosomal subunit protein uL15 (Staphylococcus aureus (strain Mu3 / ATCC 700698)).